Reading from the N-terminus, the 205-residue chain is Snake venom metalloproteinase BmooMPalpha-I (205 aa).

The 197-residue stretch at 8–204 folds into the Peptidase M12B domain; sequence RYIELVVVAD…HNPQCILNEP (197 aa). Glutamate 11 and aspartate 95 together coordinate Ca(2+). 3 cysteine pairs are disulfide-bonded: cysteine 119–cysteine 199, cysteine 159–cysteine 183, and cysteine 161–cysteine 166. A Zn(2+)-binding site is contributed by histidine 144. The active site involves glutamate 145. 2 residues coordinate Zn(2+): histidine 148 and histidine 154. Residues cysteine 199 and asparagine 202 each coordinate Ca(2+).

The protein belongs to the venom metalloproteinase (M12B) family. P-I subfamily. Monomer. Zn(2+) is required as a cofactor. As to expression, expressed by the venom gland.

The protein resides in the secreted. Its activity is regulated as follows. Inhibited by EDTA. Not inhibited by the serine proteinase inhibitors aprotinin and benzamidine. Snake venom zinc metalloproteinase that cleaves the alpha chain of fibrinogen (FGA) first followed by the beta chain (FGB) and shows no effect on the gamma chain. Cleaves only the beta chain of fibrin, leaving the gamma-dimer untouched. Shows proteolytic activity towards azocasein. Causes defibrinogenation when intraperitoneally administered on mice. The sequence is that of Snake venom metalloproteinase BmooMPalpha-I from Bothrops moojeni (Lance-headed viper).